Consider the following 177-residue polypeptide: MSKNDHLSDDELSLFREAVQGSKKLQQDTIIHQPSKNFSDLQQQRKSLKEGKNEEFFFSDEFVPLLSEDGPIRYARDDVSKYEVKRLRRGVYVPDVFLDMHGMKQDEAKRELGSMIAYCLKENISCASVMHGIGKHILKQKVPLWLAQHPDVMAFHQAPLEFGGAGAILVLLSIPDR.

A Smr domain is found at 98 to 173; sequence LDMHGMKQDE…GAGAILVLLS (76 aa).

Belongs to the SmrB family. Associates with collided ribosomes, but not with correctly translating polysomes.

Functionally, acts as a ribosome collision sensor. Detects stalled/collided disomes (pairs of ribosomes where the leading ribosome is stalled and a second ribosome has collided with it) and endonucleolytically cleaves mRNA at the 5' boundary of the stalled ribosome. Stalled/collided disomes form a new interface (primarily via the 30S subunits) that binds SmrB. Cleaved mRNA becomes available for tmRNA ligation, leading to ribosomal subunit dissociation and rescue of stalled ribosomes. In Aliivibrio fischeri (strain ATCC 700601 / ES114) (Vibrio fischeri), this protein is Ribosome rescue factor SmrB.